Here is a 297-residue protein sequence, read N- to C-terminus: MIPLSIRVPASTANVGPGFDSVGIALSLYLHVVVKEKSDKWQVIHSFEDSIPTDDKNLIVSTACKVCPSLSPHIIEVTSNIPLTRGLGSSASAIVAGIELANQLGKLNLTIDQKVQIATNFEGHPDNVAASILGGTVIGALDGKNVSVVRIESKELGVISLIPNEELNTDESRSVLPDVFPFHEAVKASAISNVLVAALCQKKWEVVGEMMERDHFHEPYRLELVPLLPSIRKCAKEFGAYGTALSGAGPSIFILTPYEKRQEIAEQLARVFTSMKVCELEIDHRGITVNKKEHIGL.

82-92 (PLTRGLGSSAS) is an ATP binding site.

Belongs to the GHMP kinase family. Homoserine kinase subfamily.

The protein resides in the cytoplasm. It catalyses the reaction L-homoserine + ATP = O-phospho-L-homoserine + ADP + H(+). It functions in the pathway amino-acid biosynthesis; L-threonine biosynthesis; L-threonine from L-aspartate: step 4/5. Catalyzes the ATP-dependent phosphorylation of L-homoserine to L-homoserine phosphate. In Bacillus thuringiensis subsp. konkukian (strain 97-27), this protein is Homoserine kinase.